Consider the following 300-residue polypeptide: Ribosomal protein L11 methyltransferase (300 aa).

Residues T152, G173, D195, and N234 each contribute to the S-adenosyl-L-methionine site.

The protein belongs to the methyltransferase superfamily. PrmA family.

It is found in the cytoplasm. The enzyme catalyses L-lysyl-[protein] + 3 S-adenosyl-L-methionine = N(6),N(6),N(6)-trimethyl-L-lysyl-[protein] + 3 S-adenosyl-L-homocysteine + 3 H(+). Methylates ribosomal protein L11. In Burkholderia cenocepacia (strain ATCC BAA-245 / DSM 16553 / LMG 16656 / NCTC 13227 / J2315 / CF5610) (Burkholderia cepacia (strain J2315)), this protein is Ribosomal protein L11 methyltransferase.